The chain runs to 247 residues: E3 ubiquitin-protein ligase RNF182 (247 aa).

The RING-type zinc finger occupies 20-68 (CKICYNRYNLKQRKPKVLECCHRVCAKCLYKIIDFGDSPQGVIVCPFCR). A run of 2 helical transmembrane segments spans residues 184-204 (VLVW…IYLL) and 211-231 (LGVV…VYGF).

In terms of assembly, interacts with ATP6V0C. In terms of tissue distribution, up-regulated in neuronal cells subjected to cell death-inducing injuries, such as oxygen and glucose deprivation (at protein level). Could be up-regulated in Alzheimer disease brains. Highly expressed in innate immune organs such as lymph nodes and spleen and in immune cells such as macrophages and dendritic cells.

Its subcellular location is the membrane. The protein localises to the cytoplasm. The enzyme catalyses S-ubiquitinyl-[E2 ubiquitin-conjugating enzyme]-L-cysteine + [acceptor protein]-L-lysine = [E2 ubiquitin-conjugating enzyme]-L-cysteine + N(6)-ubiquitinyl-[acceptor protein]-L-lysine.. It functions in the pathway protein modification; protein ubiquitination. Functionally, E3 ubiquitin-protein ligase that mediates the ubiquitination of ATP6V0C and targets it to degradation via the ubiquitin-proteasome pathway. Also plays a role in the inhibition of TLR-triggered innate immune response by mediating 'Lys'-48-linked ubiquitination and subsequent degradation of NF-kappa-B component RELA. The chain is E3 ubiquitin-protein ligase RNF182 (RNF182) from Homo sapiens (Human).